Consider the following 92-residue polypeptide: C-C motif chemokine 4 (92 aa).

A signal peptide spans Met1–Ser23. Cystine bridges form between Cys34-Cys58 and Cys35-Cys74.

It belongs to the intercrine beta (chemokine CC) family. As to quaternary structure, homodimer.

It is found in the secreted. Functionally, monokine with inflammatory and chemokinetic properties. In Rattus norvegicus (Rat), this protein is C-C motif chemokine 4 (Ccl4).